We begin with the raw amino-acid sequence, 118 residues long: Small ribosomal subunit protein uS13 (118 aa).

Residues 93-118 (KKLPVRGQRTKTNARTRKGPRKLMKK) are disordered.

Belongs to the universal ribosomal protein uS13 family. As to quaternary structure, part of the 30S ribosomal subunit. Forms a loose heterodimer with protein S19. Forms two bridges to the 50S subunit in the 70S ribosome.

Functionally, located at the top of the head of the 30S subunit, it contacts several helices of the 16S rRNA. In the 70S ribosome it contacts the 23S rRNA (bridge B1a) and protein L5 of the 50S subunit (bridge B1b), connecting the 2 subunits; these bridges are implicated in subunit movement. Contacts the tRNAs in the A and P-sites. The chain is Small ribosomal subunit protein uS13 from Buchnera aphidicola subsp. Baizongia pistaciae (strain Bp).